A 490-amino-acid polypeptide reads, in one-letter code: Myocilin (490 aa).

Residues 1–18 (MPAVQLLLLAGLVWGAGA) form the signal peptide. Positions 55 to 170 (SAIQDLQRDS…QEVARLARGQ (116 aa)) form a coiled coil. The interval 168 to 187 (RGQCPQARDTSQDVPAGSRE) is disordered. In terms of domain architecture, Olfactomedin-like spans 230–489 (GCGELVWVGQ…MVTYDIKLSK (260 aa)). The cysteines at positions 231 and 419 are disulfide-linked. Positions 366, 414, 415, 463, and 464 each coordinate Ca(2+). The Microbody targeting signal signature appears at 488–490 (SKI).

As to quaternary structure, homodimer (via N-terminus). Can also form higher oligomers. Interacts with OLFM3, FN1, NRCAM, GLDN and NFASC. Interacts (via N-terminus) with MYL2. Interacts with SFRP1, FRZB, FZD7, FZD10, FZD1 and WIF1; regulates Wnt signaling. Interacts with SNTA1; regulates muscle hypertrophy. Interacts with ERBB2 and ERBB3; activates ERBB2-ERBB3 signaling pathway. Interacts with SNCG; affects its secretion and its aggregation. In terms of processing, palmitoylated. Glycosylated. Post-translationally, undergoes a calcium-dependent proteolytic cleavage at Arg-212 by CAPN2 in the endoplasmic reticulum. The result is the production of two fragments, one of 35 kDa containing the C-terminal olfactomedin-like domain, and another of 20 kDa containing the N-terminal leucine zipper-like domain. Detected in eye aqueous humor (at protein level).

The protein resides in the secreted. The protein localises to the golgi apparatus. It is found in the cytoplasmic vesicle. It localises to the extracellular space. Its subcellular location is the extracellular matrix. The protein resides in the extracellular exosome. The protein localises to the mitochondrion. It is found in the mitochondrion intermembrane space. It localises to the mitochondrion inner membrane. Its subcellular location is the mitochondrion outer membrane. The protein resides in the rough endoplasmic reticulum. The protein localises to the cell projection. It is found in the cilium. It localises to the endoplasmic reticulum. Functionally, secreted glycoprotein regulating the activation of different signaling pathways in adjacent cells to control different processes including cell adhesion, cell-matrix adhesion, cytoskeleton organization and cell migration. Promotes substrate adhesion, spreading and formation of focal contacts. Negatively regulates cell-matrix adhesion and stress fiber assembly through Rho protein signal transduction. Modulates the organization of actin cytoskeleton by stimulating the formation of stress fibers through interactions with components of Wnt signaling pathways. Promotes cell migration through activation of PTK2 and the downstream phosphatidylinositol 3-kinase signaling. Plays a role in bone formation and promotes osteoblast differentiation in a dose-dependent manner through mitogen-activated protein kinase signaling. Mediates myelination in the peripheral nervous system through ERBB2/ERBB3 signaling. Plays a role as a regulator of muscle hypertrophy through the components of dystrophin-associated protein complex. Involved in positive regulation of mitochondrial depolarization. Plays a role in neurite outgrowth. May participate in the obstruction of fluid outflow in the trabecular meshwork. The sequence is that of Myocilin from Oryctolagus cuniculus (Rabbit).